The chain runs to 78 residues: Dihydrofolate reductase type 2 (78 aa).

NADP(+)-binding positions include 32–36 (KKSGA) and 66–69 (VQIY). Ile68 provides a ligand contact to substrate.

As to quaternary structure, homotetramer.

The catalysed reaction is (6S)-5,6,7,8-tetrahydrofolate + NADP(+) = 7,8-dihydrofolate + NADPH + H(+). The protein operates within cofactor biosynthesis; tetrahydrofolate biosynthesis; 5,6,7,8-tetrahydrofolate from 7,8-dihydrofolate: step 1/1. Functionally, key enzyme in folate metabolism. Catalyzes an essential reaction for de novo glycine and purine synthesis, and for DNA precursor synthesis. This is Dihydrofolate reductase type 2 from Escherichia coli.